Consider the following 214-residue polypeptide: Ribosomal RNA small subunit methyltransferase G (214 aa).

S-adenosyl-L-methionine-binding positions include G77, F82, 128-129 (VE), and R143.

This sequence belongs to the methyltransferase superfamily. RNA methyltransferase RsmG family.

Its subcellular location is the cytoplasm. The catalysed reaction is guanosine(527) in 16S rRNA + S-adenosyl-L-methionine = N(7)-methylguanosine(527) in 16S rRNA + S-adenosyl-L-homocysteine. Functionally, specifically methylates the N7 position of guanine in position 527 of 16S rRNA. This chain is Ribosomal RNA small subunit methyltransferase G, found in Nitrosomonas europaea (strain ATCC 19718 / CIP 103999 / KCTC 2705 / NBRC 14298).